We begin with the raw amino-acid sequence, 890 residues long: Phosphotransferase RcsD (890 aa).

Residues 1-21 (MRQKETTATTRFSLLPGSITR) are Cytoplasmic-facing. The helical transmembrane segment at 22–42 (FFLLLIIVLLVTMGVMVQSAV) threads the bilayer. Residues 43–308 (NAWLKDKSYQ…GTLLLDTLQN (266 aa)) lie on the Periplasmic side of the membrane. The chain crosses the membrane as a helical span at residues 309–329 (ILLPLLLNIGLLALALFGYTT). Residues 330–890 (FRHFSSRSTE…DIDSYVKSLL (561 aa)) are Cytoplasmic-facing. The histidine-like kinase stretch occupies residues 468–678 (NIGDALKEPA…RYSVHIKMLA (211 aa)). The 88-residue stretch at 803–890 (AQLHASGYYA…DIDSYVKSLL (88 aa)) folds into the HPt domain. His-842 is modified (phosphohistidine).

It belongs to the RcsD family. As to quaternary structure, interacts with RcsC and RcsB. Has a higher affinity for RcsB than for RcsC. Phosphorylated by RcsC.

The protein localises to the cell inner membrane. In terms of biological role, component of the Rcs signaling system, which controls transcription of numerous genes. RcsD is a phosphotransfer intermediate between the sensor kinase RcsC and the response regulator RcsB. It acquires a phosphoryl group from RcsC and transfers it to RcsB. The system controls expression of genes involved in colanic acid capsule synthesis, biofilm formation and cell division. This Escherichia coli (strain K12) protein is Phosphotransferase RcsD.